Here is a 406-residue protein sequence, read N- to C-terminus: Purine nucleoside permease (406 aa).

The signal sequence occupies residues methionine 1–alanine 22.

This sequence belongs to the NUP family.

Mammalian nucleoside transport inhibitors dipyridamole and NBMPR inhibit adenosine transport by NUP. In terms of biological role, nucleoside permease that transports adenosine and guanosine. Does not show any transport activities towards cytidine, adenine, guanine, uridine, and uracil. The chain is Purine nucleoside permease from Candida albicans (Yeast).